The chain runs to 611 residues: UvrABC system protein C (611 aa).

One can recognise a GIY-YIG domain in the interval 14–91; it reads TSPGCYIHKD…IKENQPKYNI (78 aa). In terms of domain architecture, UVR spans 196–231; the sequence is DQIIEDLRGKMAGAAQAMEFEKAAEYRDLIQSIGTL. The interval 587–611 is disordered; the sequence is KLNPKTQEQEQAQLREVAEPQIGLE.

The protein belongs to the UvrC family. Interacts with UvrB in an incision complex.

Its subcellular location is the cytoplasm. Functionally, the UvrABC repair system catalyzes the recognition and processing of DNA lesions. UvrC both incises the 5' and 3' sides of the lesion. The N-terminal half is responsible for the 3' incision and the C-terminal half is responsible for the 5' incision. In Streptococcus sanguinis (strain SK36), this protein is UvrABC system protein C.